Here is a 541-residue protein sequence, read N- to C-terminus: Halolysin-like extracellular serine protease Nep (541 aa).

Positions 1 to 33 (MTRDTNSNVGRRSVLKAASALGAFLGLGGVASA) form a signal peptide, tat-type signal. Positions 34 to 121 (TPGREPGPKK…DNATYETLEV (88 aa)) are excised as a propeptide. Positions 130–405 (QYAPQQVNCE…YGRVDAELAV (276 aa)) constitute a Peptidase S8 domain. Catalysis depends on charge relay system residues Asp157, His198, and Ser351. The segment at 403–453 (LAVTTDPDNGDDDDDDDDDEDDPGDGECGDETNTATADGELSGGWGGNPSD) is disordered. The segment covering 410–432 (DNGDDDDDDDDDEDDPGDGECGD) has biased composition (acidic residues).

The protein belongs to the peptidase S8 family. As to quaternary structure, monomer. In terms of processing, exported by the Tat system. The position of the signal peptide cleavage has not been experimentally proven. After transport across the membrane, the propeptide is probably processed autocatalytically, yielding the mature fully active protease.

The protein localises to the secreted. With respect to regulation, dependent on high salt concentrations for activity and stability. Strongly inhibited by the serine protease inhibitors diisopropyl fluorophosphate (DFP), phenylmethyl sulfonylfluoride (PMSF) and chymostatin. Also inhibited by denaturing agents such as SDS, urea, and HCl guanidinium. Activated by thiol-containing reducing agents such as dithiotreitol (DTT) and 2-mercaptoethanol. Its function is as follows. Serine protease that hydrolyzes large proteins such as casein and gelatin. Cleaves preferentially at the carboxyl terminus of Phe, Tyr or Leu. Is also able to catalyze peptide synthesis under different salt concentrations in the presence of dimethyl sulfoxide (DMSO). This chain is Halolysin-like extracellular serine protease Nep, found in Natrialba magadii.